The sequence spans 222 residues: CEACAM1-like protein UL7 (222 aa).

Residues N50, N56, N60, N71, N105, N109, N125, N132, N147, N164, N168, and N189 are each glycosylated (N-linked (GlcNAc...) asparagine; by host). The helical transmembrane segment at L193–W213 threads the bilayer.

Belongs to the RL11 family. In terms of assembly, interacts with host FLT3. In terms of processing, highly glycosylated.

It is found in the secreted. It localises to the host cell membrane. Plays a role in modulating the host immune response and affecting host cytokine production. Structurally and functionally homolog of host CEACAM1, induces endothelial cell angiogenesis. Ligands for host FLT3 receptor, activates the PI3K/AKT and MAPK/ERK pathways. In turn, triggers hematopoietic progenitor cell and monocyte differentiation leading to virus reactivation. The polypeptide is CEACAM1-like protein UL7 (UL7) (Human cytomegalovirus (strain AD169) (HHV-5)).